The chain runs to 126 residues: UPF0538 protein C2orf76 homolog (126 aa).

The protein belongs to the UPF0538 family.

The protein is UPF0538 protein C2orf76 homolog of Mus musculus (Mouse).